Here is a 525-residue protein sequence, read N- to C-terminus: 2,3-bisphosphoglycerate-independent phosphoglycerate mutase 2 (525 aa).

Residues aspartate 14 and serine 64 each contribute to the Mn(2+) site. Serine 64 (phosphoserine intermediate) is an active-site residue. Substrate-binding positions include histidine 125, 155-156, arginine 187, arginine 193, 274-277, and lysine 347; these read RD and RADR. Aspartate 414, histidine 418, aspartate 455, histidine 456, and histidine 474 together coordinate Mn(2+).

Belongs to the BPG-independent phosphoglycerate mutase family. Mn(2+) is required as a cofactor.

It catalyses the reaction (2R)-2-phosphoglycerate = (2R)-3-phosphoglycerate. It functions in the pathway carbohydrate degradation; glycolysis; pyruvate from D-glyceraldehyde 3-phosphate: step 3/5. Functionally, catalyzes the interconversion of 2-phosphoglycerate and 3-phosphoglycerate. The polypeptide is 2,3-bisphosphoglycerate-independent phosphoglycerate mutase 2 (Methanosarcina barkeri (strain Fusaro / DSM 804)).